A 1096-amino-acid polypeptide reads, in one-letter code: Carbamoyl phosphate synthase large chain (1096 aa).

Residues 1 to 402 (MPKRDDINSV…ALQKALRSLE (402 aa)) are carboxyphosphate synthetic domain. ATP is bound by residues Arg129, Arg169, Gly175, Gly176, Glu208, Ile210, Glu215, Gly241, Val242, His243, Gln285, and Glu299. In terms of domain architecture, ATP-grasp 1 spans 133-328 (KDLVIESGAD…IAKIAAKLAI (196 aa)). Mg(2+)-binding residues include Gln285, Glu299, and Asn301. The Mn(2+) site is built by Gln285, Glu299, and Asn301. The segment at 403 to 547 (KRGSSFHWGP…YSSYDSETEI (145 aa)) is oligomerization domain. The tract at residues 548–950 (VPSDRRKVII…AFAKSQEAAF (403 aa)) is carbamoyl phosphate synthetic domain. An ATP-grasp 2 domain is found at 676–870 (SGILDTAGLV…LAKAASLVMV (195 aa)). Residues Arg712, Arg754, Leu756, Glu761, Gly786, Ile787, His788, Ser789, Gln829, and Glu841 each contribute to the ATP site. Positions 829, 841, and 843 each coordinate Mg(2+). Residues Gln829, Glu841, and Asn843 each contribute to the Mn(2+) site. Residues 951–1095 (GGLPLSGTVF…QDYAIAREAR (145 aa)) form the MGS-like domain. The segment at 951–1096 (GGLPLSGTVF…DYAIAREARR (146 aa)) is allosteric domain.

Belongs to the CarB family. Composed of two chains; the small (or glutamine) chain promotes the hydrolysis of glutamine to ammonia, which is used by the large (or ammonia) chain to synthesize carbamoyl phosphate. Tetramer of heterodimers (alpha,beta)4. The cofactor is Mg(2+). Mn(2+) serves as cofactor.

It carries out the reaction hydrogencarbonate + L-glutamine + 2 ATP + H2O = carbamoyl phosphate + L-glutamate + 2 ADP + phosphate + 2 H(+). It catalyses the reaction hydrogencarbonate + NH4(+) + 2 ATP = carbamoyl phosphate + 2 ADP + phosphate + 2 H(+). The protein operates within amino-acid biosynthesis; L-arginine biosynthesis; carbamoyl phosphate from bicarbonate: step 1/1. It functions in the pathway pyrimidine metabolism; UMP biosynthesis via de novo pathway; (S)-dihydroorotate from bicarbonate: step 1/3. Its function is as follows. Large subunit of the glutamine-dependent carbamoyl phosphate synthetase (CPSase). CPSase catalyzes the formation of carbamoyl phosphate from the ammonia moiety of glutamine, carbonate, and phosphate donated by ATP, constituting the first step of 2 biosynthetic pathways, one leading to arginine and/or urea and the other to pyrimidine nucleotides. The large subunit (synthetase) binds the substrates ammonia (free or transferred from glutamine from the small subunit), hydrogencarbonate and ATP and carries out an ATP-coupled ligase reaction, activating hydrogencarbonate by forming carboxy phosphate which reacts with ammonia to form carbamoyl phosphate. The sequence is that of Carbamoyl phosphate synthase large chain from Clavibacter michiganensis subsp. michiganensis (strain NCPPB 382).